Reading from the N-terminus, the 292-residue chain is MDQYNLNTREGRWKHFGSVDPIKGTKPTEKEKMTDLQSSKKDFLFEIDHVGIKNLTYPVRLDGYQTAGTFSLSTHLAKDEKGINMSRILESVEAHYDNGLSLDFDTLKTVLITLQTVMHQKDATVDVDAKWFFDRFSPVTNLRAIGHADTRFSMTVEGDTTVNKSLTLTAMVTTLCPCSKEISEYSAHNQRGIVTVKADFAPEGELPANFKERILEAMEVNASSMLYPILKRTDEKSVTERAYENPRFVEDLLRLIAADLVELDFVTGFTIECRNEESIHQHDAFARLSYNK.

It belongs to the GTP cyclohydrolase IV family.

The enzyme catalyses GTP + H2O = 7,8-dihydroneopterin 3'-triphosphate + formate + H(+). The protein operates within cofactor biosynthesis; 7,8-dihydroneopterin triphosphate biosynthesis; 7,8-dihydroneopterin triphosphate from GTP: step 1/1. In terms of biological role, converts GTP to 7,8-dihydroneopterin triphosphate. The polypeptide is GTP cyclohydrolase FolE2 (Macrococcus caseolyticus (strain JCSC5402) (Macrococcoides caseolyticum)).